Reading from the N-terminus, the 208-residue chain is Large ribosomal subunit protein uL3 (208 aa).

The interval 123 to 147 (RHGQSRGPMAHGSRYHRRPGSMGPV) is disordered.

The protein belongs to the universal ribosomal protein uL3 family. In terms of assembly, part of the 50S ribosomal subunit. Forms a cluster with proteins L14 and L19.

One of the primary rRNA binding proteins, it binds directly near the 3'-end of the 23S rRNA, where it nucleates assembly of the 50S subunit. This chain is Large ribosomal subunit protein uL3, found in Streptococcus uberis (strain ATCC BAA-854 / 0140J).